A 660-amino-acid chain; its full sequence is Potassium voltage-gated channel subfamily KQT member 1 (660 aa).

A compositionally biased stretch (polar residues) spans 1 to 18 (MSSEVKSRWSGSGSQKSG). A disordered region spans residues 1–67 (MSSEVKSRWS…PESRAADSRA (67 aa)). Over 1–113 (MSSEVKSRWS…YNFLERPTGW (113 aa)) the chain is Cytoplasmic. Over residues 53–67 (STDKNPESRAADSRA) the composition is skewed to basic and acidic residues. The helical transmembrane segment at 114 to 135 (KCFIYHFTVFLIVLVCLIFSVM) threads the bilayer. The Extracellular portion of the chain corresponds to 136 to 146 (STIEQYHYFAN). The chain crosses the membrane as a helical span at residues 147-169 (RALVWMEIVLVVFFGTEYIVRLW). Residues 170 to 185 (SAGCRSKYVGFWGRLR) lie on the Cytoplasmic side of the membrane. Residues 186 to 211 (FARKPISIIDLIVVVASVIVLCVGSN) form a helical membrane-spanning segment. Topologically, residues 212–219 (GQVFATSA) are extracellular. Residues 220 to 235 (IRGIRFLQILRMLHVD) form a helical; Voltage-sensor membrane-spanning segment. The Cytoplasmic segment spans residues 236-253 (RQGGTWRLLGSVVFIHRQ). Q237 contacts a 1,2-diacyl-sn-glycero-3-phospho-(1D-myo-inositol-4,5-bisphosphate). Residues 254–276 (ELITTLYIGFLGLIFSSYFVYLA) traverse the membrane as a helical segment. The Extracellular segment spans residues 277 to 292 (EKDAVDDSGSQQFGSY). The segment at residues 293–313 (ADALWWGVVTVTTIGYGDKVP) is an intramembrane region (pore-forming). At 314 to 315 (QT) the chain is on the extracellular side. Residues 316 to 341 (WIGRTIASCFSVFAISFFALPAGILG) traverse the membrane as a helical segment. The Cytoplasmic segment spans residues 342 to 660 (SGFALKVQQK…RKDQDNQPDL (319 aa)). Residues 399–426 (SPSPKTKKSVGKRKKLKTDKDNGLNSEK) are disordered. Basic residues predominate over residues 403–415 (KTKKSVGKRKKLK). A coiled-coil region spans residues 579-615 (KNTIGARLNRVEEKFVHMDQKLNTITDMLHHLVAHQQ).

The protein belongs to the potassium channel family. KQT (TC 1.A.1.15) subfamily. Kv7.1/KCNQ1 sub-subfamily. Tetramer. Heterotetramer with KCNE1; targets to the membrane raft. Interacts (via C-terminus) with CALM; forms a heterotetramer in a calcium-independent manner. Interacts with KCNE2; form a heterooligomer complex that targets to the membrane raft and leading to currents with an apparently instantaneous activation, a rapid deactivation process and a linear current-voltage relationship and decreases the amplitude of the outward current. Interacts with KCNE3; four KCNE3 molecules are bound to one KCNQ1 tetramer (4:4 KCNQ1:KCNE3 stoichiometry); alters membrane raft localization; affects KCNQ1 structure and gating properties. Interacts with KCNE4; impairs KCNQ1 localization in lipid rafts and inhibits voltage-gated potassium channel activity. Interacts with KCNE5; impairs KCNQ1 localization in lipid rafts and only conducts current upon strong and continued depolarization. As to expression, expressed only in rectal gland and heart. Faintly expressed in intestine. Undetectable in kidney, brain, testis, liver and gills.

The protein resides in the cell membrane. Its subcellular location is the cytoplasmic vesicle membrane. It is found in the membrane raft. The protein localises to the endoplasmic reticulum. It localises to the basolateral cell membrane. The catalysed reaction is K(+)(in) = K(+)(out). Its activity is regulated as follows. PIP2 molecule is essential to activate KCNQ channels by inducing the coupling of the voltage-sensing domain (VSD) and the pore-forming domain (PD). Upon channel activation, PIP2 disrupts the VSD-calmodulin/CALM interactions, causing the release of CALM from the VSD which triggers the opening of the gate. Calcium potentiates KCNQ1 channel current through calcium-bound CALM. Calcium-bound CALM competes with PIP2 to stabilize the channel open state. In terms of biological role, pore-forming subunit of the voltage-gated potassium (Kv) channel involved in the regulation of cardiomyocyte excitability and important in normal development and functions of myocardium, inner ear, stomach and colon. Associates with KCNE beta subunits that modulates current kinetics. Induces a voltage-dependent by rapidly activating and slowly deactivating potassium-selective outward current. Also promotes a delayed voltage activated potassium current showing outward rectification characteristic. During beta-adrenergic receptor stimulation participates in cardiac repolarization by associating with KCNE1 to form the I(Ks) cardiac potassium current that increases the amplitude and slows down the activation kinetics of outward potassium current I(Ks). When associated with KCNE3, forms the potassium channel that is important for cyclic AMP-stimulated intestinal secretion of chloride ions. When associated with KCNE2, forms a heterooligomer complex leading to currents with an apparently instantaneous activation, a rapid deactivation process and a linear current-voltage relationship and decreases the amplitude of the outward current. When associated with KCNE4, inhibits voltage-gated potassium channel activity. When associated with KCNE5, this complex only conducts current upon strong and continued depolarization. This is Potassium voltage-gated channel subfamily KQT member 1 from Squalus acanthias (Spiny dogfish).